A 193-amino-acid chain; its full sequence is Large ribosomal subunit protein uL5 (193 aa).

It belongs to the universal ribosomal protein uL5 family. Part of the 50S ribosomal subunit; part of the 5S rRNA/L5/L18/L25 subcomplex. Contacts the 5S rRNA and the P site tRNA. Forms a bridge to the 30S subunit in the 70S ribosome.

Its function is as follows. This is one of the proteins that bind and probably mediate the attachment of the 5S RNA into the large ribosomal subunit, where it forms part of the central protuberance. In the 70S ribosome it contacts protein S13 of the 30S subunit (bridge B1b), connecting the 2 subunits; this bridge is implicated in subunit movement. Contacts the P site tRNA; the 5S rRNA and some of its associated proteins might help stabilize positioning of ribosome-bound tRNAs. The polypeptide is Large ribosomal subunit protein uL5 (Renibacterium salmoninarum (strain ATCC 33209 / DSM 20767 / JCM 11484 / NBRC 15589 / NCIMB 2235)).